The primary structure comprises 72 residues: Translation initiation factor IF-1 (72 aa).

Residues 1 to 72 (MAKEDCIEME…SKGRIIYRAR (72 aa)) enclose the S1-like domain.

This sequence belongs to the IF-1 family. As to quaternary structure, component of the 30S ribosomal translation pre-initiation complex which assembles on the 30S ribosome in the order IF-2 and IF-3, IF-1 and N-formylmethionyl-tRNA(fMet); mRNA recruitment can occur at any time during PIC assembly.

Its subcellular location is the cytoplasm. Functionally, one of the essential components for the initiation of protein synthesis. Stabilizes the binding of IF-2 and IF-3 on the 30S subunit to which N-formylmethionyl-tRNA(fMet) subsequently binds. Helps modulate mRNA selection, yielding the 30S pre-initiation complex (PIC). Upon addition of the 50S ribosomal subunit IF-1, IF-2 and IF-3 are released leaving the mature 70S translation initiation complex. This chain is Translation initiation factor IF-1, found in Pseudoalteromonas atlantica (strain T6c / ATCC BAA-1087).